The sequence spans 214 residues: MDQSIADLRKNYTLTGLTEAEANPNPFVQFRLWFNQALEAQFLEPNAMTIATVTPDGKPSARMVLLKDFDERGFVFYTNYDSAKGQQLAQTPWAALVFWWDALERQVRIEGTVEKVSQEESDAYFASRPWESRLGAWVSDQSRVIESREVLENRLQALKDKYQAQDVPRPPHWGGFRVMPEKIEFWQGRPNRLHDRLCYKWIEGEKWIIERLSP.

Residues 9–12 and Lys-67 contribute to the substrate site; that span reads RKNY. FMN is bound by residues 62-67, 77-78, Lys-84, and Gln-106; these read RMVLLK and YT. Residues Tyr-124, Arg-128, and Ser-132 each contribute to the substrate site. Residues 141 to 142 and Trp-186 each bind FMN; that span reads QS. 192–194 serves as a coordination point for substrate; that stretch reads RLH. Arg-196 provides a ligand contact to FMN.

The protein belongs to the pyridoxamine 5'-phosphate oxidase family. As to quaternary structure, homodimer. It depends on FMN as a cofactor.

It catalyses the reaction pyridoxamine 5'-phosphate + O2 + H2O = pyridoxal 5'-phosphate + H2O2 + NH4(+). The enzyme catalyses pyridoxine 5'-phosphate + O2 = pyridoxal 5'-phosphate + H2O2. Its pathway is cofactor metabolism; pyridoxal 5'-phosphate salvage; pyridoxal 5'-phosphate from pyridoxamine 5'-phosphate: step 1/1. It functions in the pathway cofactor metabolism; pyridoxal 5'-phosphate salvage; pyridoxal 5'-phosphate from pyridoxine 5'-phosphate: step 1/1. Functionally, catalyzes the oxidation of either pyridoxine 5'-phosphate (PNP) or pyridoxamine 5'-phosphate (PMP) into pyridoxal 5'-phosphate (PLP). This chain is Pyridoxine/pyridoxamine 5'-phosphate oxidase, found in Gloeothece citriformis (strain PCC 7424) (Cyanothece sp. (strain PCC 7424)).